A 446-amino-acid chain; its full sequence is Anthranilate N-benzoyltransferase protein 2 (446 aa).

Active-site proton acceptor residues include His-164 and Asp-393.

This sequence belongs to the plant acyltransferase family. N-terminus is blocked.

The catalysed reaction is anthranilate + benzoyl-CoA = N-benzoylanthranilate + CoA. It participates in phytoalexin biosynthesis; methoxydianthramide B biosynthesis. Catalyzes the formation of N-benzoylanthranilate, in the course of methoxydianthramide B, a phytoalexin. Phytoalexins are produced in response to infection by parasites, and are essential for the expression of disease resistance. The chain is Anthranilate N-benzoyltransferase protein 2 (HCBT2) from Dianthus caryophyllus (Carnation).